A 305-amino-acid chain; its full sequence is MPIQINKTVIFLMGPTASGKTNLAIKLSQQFKTRLISVDSALIYKGMNIGTAKPDKATLKKYPHYLINICSPESSYSVFDFIRDANKQIKTAFAKNELPILVGGTSFYFHVLEHGLSNLPESSTKSKEKFNQLLRNKGTIKLHQDLKKIDPQAANKIHPNDSQRIIRALEVFNLSGKTISELQGNKKPIIDYPIKKIILMPKRNELHTKIETRFLLMMKNGFLNEVQHLKQNPNLHQNLSSIRCVGYRQAWQYLNGKIDKTEMIEKIIIATRQLCKRQITWLKSEKYALVLNNSNLAKAVTFINS.

14–21 (GPTASGKT) provides a ligand contact to ATP. Substrate is bound at residue 16–21 (TASGKT). Interaction with substrate tRNA regions lie at residues 39 to 42 (DSAL), 163 to 167 (QRIIR), and 243 to 248 (RCVGYR).

The protein belongs to the IPP transferase family. Monomer. The cofactor is Mg(2+).

It catalyses the reaction adenosine(37) in tRNA + dimethylallyl diphosphate = N(6)-dimethylallyladenosine(37) in tRNA + diphosphate. In terms of biological role, catalyzes the transfer of a dimethylallyl group onto the adenine at position 37 in tRNAs that read codons beginning with uridine, leading to the formation of N6-(dimethylallyl)adenosine (i(6)A). The protein is tRNA dimethylallyltransferase of Vesicomyosocius okutanii subsp. Calyptogena okutanii (strain HA).